Consider the following 224-residue polypeptide: UPF0173 metal-dependent hydrolase TON_1314 (224 aa).

It belongs to the UPF0173 family.

In Thermococcus onnurineus (strain NA1), this protein is UPF0173 metal-dependent hydrolase TON_1314.